The chain runs to 79 residues: Acyl carrier protein (79 aa).

A Carrier domain is found at 2-77 (DNIEQRVKKI…QAIDYATAHV (76 aa)). The residue at position 37 (Ser37) is an O-(pantetheine 4'-phosphoryl)serine.

The protein belongs to the acyl carrier protein (ACP) family. In terms of processing, 4'-phosphopantetheine is transferred from CoA to a specific serine of apo-ACP by AcpS. This modification is essential for activity because fatty acids are bound in thioester linkage to the sulfhydryl of the prosthetic group.

Its subcellular location is the cytoplasm. It participates in lipid metabolism; fatty acid biosynthesis. Carrier of the growing fatty acid chain in fatty acid biosynthesis. The sequence is that of Acyl carrier protein from Cupriavidus pinatubonensis (strain JMP 134 / LMG 1197) (Cupriavidus necator (strain JMP 134)).